The sequence spans 351 residues: Protein disulfide isomerase CRELD2 (351 aa).

A signal peptide spans 1–21 (MRPPAPAVLGLLLLLLPTGEA). The CXXC signature appears at 28–31 (CKRC). 4 disulfides stabilise this stretch: Cys-28-Cys-31, Cys-137-Cys-151, Cys-145-Cys-163, and Cys-165-Cys-174. In terms of domain architecture, EGF-like 1 spans 133–175 (DCLACQGGSERPCSGNGHCVGDGTREGDGSCQCHLGYQGPLCS). The stretch at 190 to 237 (HSICSACDEACKTCVGPTNRDCGQCEVGWVRQDDACVDVDECAAEPPP) is one FU 1 repeat. A glycan (N-linked (GlcNAc...) asparagine) is linked at Asn-248. The stretch at 250–297 (SFVCEECDPTCMGCTGKGPTQCRECIAGYSKESGQCEDIDECSLAEKP) is one FU 2 repeat. A CXXC motif is present at residues 260 to 263 (CMGC). 4 cysteine pairs are disulfide-bonded: Cys-260–Cys-263, Cys-291–Cys-305, Cys-298–Cys-314, and Cys-316–Cys-327. An EGF-like 2; calcium-binding domain is found at 287-328 (DIDECSLAEKPCLRDNENCYNTPGSFVCVCPDGFEEAEDTCV). The disordered stretch occupies residues 329–351 (QTRPAGAEATEASPTQPPSREDL).

The protein belongs to the CRELD family. As to quaternary structure, interacts with CHRNA4. Component of a complex containing at least CRELD2, MANF, MATN3 and PDIA4.

The protein localises to the endoplasmic reticulum. It carries out the reaction Catalyzes the rearrangement of -S-S- bonds in proteins.. Its function is as follows. Protein disulfide isomerase. Might play a role in the unfolded protein response. May regulate transport of alpha4-beta2 neuronal acetylcholine receptor. The polypeptide is Protein disulfide isomerase CRELD2 (CRELD2) (Bos taurus (Bovine)).